Here is a 114-residue protein sequence, read N- to C-terminus: uncharacterized protein (114 aa).

3 helical membrane-spanning segments follow: residues 21–41 (LASSLLISFSSFLFISSVCLF), 65–85 (GCFSSSFLSLSCLMSTLSALI), and 93–113 (LSVFTVVVSASLGSVFTILTD).

The protein resides in the membrane. This is an uncharacterized protein from Saccharomyces cerevisiae (strain ATCC 204508 / S288c) (Baker's yeast).